Reading from the N-terminus, the 513-residue chain is Probable vesicular acetylcholine transporter-A (513 aa).

The Cytoplasmic segment spans residues 1 to 39; the sequence is MATEESGGLAQTAAVKLSEMGERTKQLGNAIQDPERQRR. A helical transmembrane segment spans residues 40 to 60; the sequence is IILVIVCVALLLDNMLYMVIV. Residues 61 to 98 lie on the Lumenal, vesicle side of the membrane; that stretch reads PIVPDYLAHLESESEQAHVKGNSSINITQNENFDLQIG. N-linked (GlcNAc...) asparagine glycans are attached at residues asparagine 82 and asparagine 86. Residues 99–119 form a helical membrane-spanning segment; the sequence is VLFASKAILQLLVNPLTGTFI. Residues 120-125 are Cytoplasmic-facing; sequence DRVGYD. A helical transmembrane segment spans residues 126 to 146; it reads IPLLIGLSIMFVSTCIFAFAE. Residues 147 to 156 lie on the Lumenal, vesicle side of the membrane; the sequence is NYATLFMARS. Residues 157 to 174 traverse the membrane as a helical segment; that stretch reads LQGLGSAFADTSGIAMIA. At 175-186 the chain is on the cytoplasmic side; sequence DKYAEESERSRA. A helical transmembrane segment spans residues 187-207; it reads LGIALAFISFGSLAAPPFGGV. The Lumenal, vesicle segment spans residues 208–215; sequence LYEFAGKR. A helical transmembrane segment spans residues 216-236; sequence FPFIALACVCLADGILCLTVL. Residues 237–257 are Cytoplasmic-facing; the sequence is KPFSSRTRENMPVGTPIYKLM. The helical transmembrane segment at 258 to 278 threads the bilayer; it reads IDPYIAVVAGALTTCNIPLAF. The Lumenal, vesicle segment spans residues 279 to 296; the sequence is LEPTIANWMEETMNASQW. Asparagine 292 carries an N-linked (GlcNAc...) asparagine glycan. Residues 297 to 317 traverse the membrane as a helical segment; the sequence is QIGITWLPAFFPHILGVYLTV. Topologically, residues 318-327 are cytoplasmic; sequence KLAAKYPHLQ. Residues 328 to 348 form a helical membrane-spanning segment; the sequence is WFYGALGMVIIGASSCIVPAC. The Lumenal, vesicle portion of the chain corresponds to 349–353; the sequence is KNFEQ. Residues 354 to 374 traverse the membrane as a helical segment; the sequence is LIIPLCGVCFGIALVDTALLP. Topologically, residues 375-390 are cytoplasmic; the sequence is TLAFLVDVRHVSVYGS. Residues 391 to 411 form a helical membrane-spanning segment; sequence VYAIADISYCVAYALGPIVAG. Residues 412-418 are Lumenal, vesicle-facing; sequence KIVHDLG. The chain crosses the membrane as a helical span at residues 419-439; the sequence is FVQLNLGMGLANVLYAPALLL. Residues 440 to 513 lie on the Cytoplasmic side of the membrane; sequence LRNVSLMKPS…EEETSEPEYI (74 aa). The tract at residues 475–513 is disordered; that stretch reads RKKHGYSSSGNCVPIDENGTFAGQSKSFSEEETSEPEYI. The span at 504–513 shows a compositional bias: acidic residues; it reads EEETSEPEYI.

This sequence belongs to the major facilitator superfamily. Vesicular transporter family.

It localises to the membrane. In terms of biological role, involved in acetylcholine transport into synaptic vesicles. This Danio rerio (Zebrafish) protein is Probable vesicular acetylcholine transporter-A.